The primary structure comprises 370 residues: MLTCIACTKQLNTNNGGSTREEDEEHGVIGTPRTKQAIKSLTSQLKDMAVKASGAYKNCKPCSGTTNRNQNRNYADSDAASDSGRFHYSYQRAGTATSTPKIWGNEMESRLKGISSEEGTPTSMSGRTESIVFMEDDEVKEWVAQVEPGVLITFVSLPQGGNDLKRIRFRSTRFPYYRDQLLLWCRQGWVFWPQNCREMFNKWQAQKWWVENFEKVMELYNVQFNQQSVPLQTPPVSEDGGSQIQSVKDSPVTPPLERERPHRNIPGSSGFASTPKLSSISGTKTETSSIDGSARSSSVDRSEEVSVSNASDMESEWVEQDEPGIYITIRALPDGNRELRRVRFSRDKFGETHARLWWEQNRARIQQQYL.

The BRX 1 domain occupies 140–221 (KEWVAQVEPG…NFEKVMELYN (82 aa)). Composition is skewed to polar residues over residues 231–248 (LQTP…QSVK) and 266–291 (PGSS…SSID). The tract at residues 231–316 (LQTPPVSEDG…VSNASDMESE (86 aa)) is disordered. In terms of domain architecture, BRX 2 spans 315-370 (SEWVEQDEPGIYITIRALPDGNRELRRVRFSRDKFGETHARLWWEQNRARIQQQYL).

The protein belongs to the BRX family. As to expression, expressed in roots.

The protein localises to the nucleus. In Arabidopsis thaliana (Mouse-ear cress), this protein is Protein Brevis radix-like 3 (BRXL3).